Consider the following 222-residue polypeptide: Superoxide dismutase [Mn], mitochondrial (222 aa).

The N-terminal 24 residues, 1 to 24 (MLSRAACSTSRRLVPALSVLGSRQ), are a transit peptide targeting the mitochondrion. H50 contacts Mn(2+). Residue Y58 is modified to 3'-nitrotyrosine. An N6-acetyllysine; alternate mark is found at K68 and K75. Residues K68 and K75 each carry the N6-succinyllysine; alternate modification. Residue H98 participates in Mn(2+) binding. N6-acetyllysine; alternate occurs at positions 122 and 130. 2 positions are modified to N6-succinyllysine; alternate: K122 and K130. Mn(2+) is bound by residues D183 and H187. An N6-acetyllysine modification is found at K202.

This sequence belongs to the iron/manganese superoxide dismutase family. In terms of assembly, homotetramer. It depends on Mn(2+) as a cofactor. Nitrated under oxidative stress. Nitration coupled with oxidation inhibits the catalytic activity. Post-translationally, acetylation at Lys-122 decreases enzymatic activity. Deacetylated by SIRT3 upon exposure to ionizing radiations or after long fasting. In terms of processing, polyubiquitinated; leading to proteasomal degradation. Deubiquitinated by USP36 which increases protein stability.

It is found in the mitochondrion matrix. It carries out the reaction 2 superoxide + 2 H(+) = H2O2 + O2. Its function is as follows. Destroys superoxide anion radicals which are normally produced within the cells and which are toxic to biological systems. This chain is Superoxide dismutase [Mn], mitochondrial (SOD2), found in Bos taurus (Bovine).